The sequence spans 340 residues: Pesticidal crystal protein Cry15Aa (340 aa).

Positions 318–340 are disordered; sequence RDYDKEHICHDQAEKYERDYDKE.

Functionally, promotes colloidosmotic lysis by binding to the midgut epithelial cells of lepidopteran larvae. The polypeptide is Pesticidal crystal protein Cry15Aa (cry15Aa) (Bacillus thuringiensis subsp. thompsoni).